Reading from the N-terminus, the 378-residue chain is UPF0754 membrane protein BCE33L0760 (378 aa).

Helical transmembrane passes span 1 to 21 (MNIW…GGFT) and 357 to 377 (YLGA…LLFL).

This sequence belongs to the UPF0754 family.

Its subcellular location is the cell membrane. This Bacillus cereus (strain ZK / E33L) protein is UPF0754 membrane protein BCE33L0760.